Reading from the N-terminus, the 118-residue chain is Large ribosomal subunit protein bL20 (118 aa).

The protein belongs to the bacterial ribosomal protein bL20 family.

Binds directly to 23S ribosomal RNA and is necessary for the in vitro assembly process of the 50S ribosomal subunit. It is not involved in the protein synthesizing functions of that subunit. This chain is Large ribosomal subunit protein bL20, found in Francisella tularensis subsp. novicida (strain U112).